Consider the following 1232-residue polypeptide: Chromosome-associated kinesin KIF4A (1232 aa).

One can recognise a Kinesin motor domain in the interval P9–I336. ATP is bound at residue G88 to T95. Residues E350–V999 adopt a coiled-coil conformation. At S394 the chain carries Phosphoserine. Residues A496–H515 form a disordered region. The segment covering Q497 to H515 has biased composition (polar residues). The tract at residues Q663–H1232 is required for the interaction with PRC1. The short motif at P793–R798 is the Nuclear localization signal element. T799 is modified (phosphothreonine). S801, S810, S815, and S951 each carry phosphoserine. T995 carries the post-translational modification Phosphothreonine. The interval A1000 to H1232 is globular. S1001, S1013, S1017, S1028, and S1126 each carry phosphoserine. Positions C1086–D1144 are CRD; required for [4Fe-4S] cluster binding and localization to the spindle midzone and midbody during anaphase and telophase. Positions Q1122–L1142 are disordered. Over residues R1132 to L1142 the composition is skewed to basic and acidic residues. T1181 carries the phosphothreonine modification. S1186 is modified (phosphoserine). K1194 is covalently cross-linked (Glycyl lysine isopeptide (Lys-Gly) (interchain with G-Cter in SUMO2)). S1225 carries the phosphoserine modification.

This sequence belongs to the TRAFAC class myosin-kinesin ATPase superfamily. Kinesin family. Chromokinesin subfamily. Interacts with the cytosolic iron-sulfur protein assembly (CIA) complex components CIAO2B and MMS19; the interactions facilitate the transfer of Fe-S clusters to KIF4A to ensure proper localization of KIF4A to mitotic machinery components. Interacts (via C-terminus) with unphosphorylated PRC1 (via N-terminus); the interaction is required for the progression of mitosis. [2Fe-2S] cluster is required as a cofactor. [4Fe-4S] cluster serves as cofactor. As to expression, highly expressed in hematopoietic tissues, fetal liver, spleen, thymus and adult thymus and bone marrow. Lower levels are found in heart, testis, kidney, colon and lung.

Its subcellular location is the nucleus matrix. The protein localises to the cytoplasm. The protein resides in the cytoskeleton. It localises to the spindle. It is found in the midbody. Its subcellular location is the chromosome. Functionally, iron-sulfur (Fe-S) cluster binding motor protein that has a role in chromosome segregation during mitosis. Translocates PRC1 to the plus ends of interdigitating spindle microtubules during the metaphase to anaphase transition, an essential step for the formation of an organized central spindle midzone and midbody and for successful cytokinesis. May play a role in mitotic chromosomal positioning and bipolar spindle stabilization. The chain is Chromosome-associated kinesin KIF4A (KIF4A) from Homo sapiens (Human).